A 309-amino-acid chain; its full sequence is HPr kinase/phosphorylase (309 aa).

Residues His138 and Lys159 contribute to the active site. 153 to 160 (GKSGIGKS) serves as a coordination point for ATP. Residue Ser160 coordinates Mg(2+). Asp177 (proton acceptor; for phosphorylation activity. Proton donor; for dephosphorylation activity) is an active-site residue. Residues 201-210 (IEVRGIGILD) are important for the catalytic mechanism of both phosphorylation and dephosphorylation. Glu202 serves as a coordination point for Mg(2+). Arg243 is an active-site residue. The interval 264-269 (PIKPAR) is important for the catalytic mechanism of dephosphorylation.

Belongs to the HPrK/P family. In terms of assembly, homohexamer. The cofactor is Mg(2+).

The catalysed reaction is [HPr protein]-L-serine + ATP = [HPr protein]-O-phospho-L-serine + ADP + H(+). It carries out the reaction [HPr protein]-O-phospho-L-serine + phosphate + H(+) = [HPr protein]-L-serine + diphosphate. Catalyzes the ATP- as well as the pyrophosphate-dependent phosphorylation of a specific serine residue in HPr, a phosphocarrier protein of the phosphoenolpyruvate-dependent sugar phosphotransferase system (PTS). HprK/P also catalyzes the pyrophosphate-producing, inorganic phosphate-dependent dephosphorylation (phosphorolysis) of seryl-phosphorylated HPr (P-Ser-HPr). The two antagonistic activities of HprK/P are regulated by several intracellular metabolites, which change their concentration in response to the absence or presence of rapidly metabolisable carbon sources (glucose, fructose, etc.) in the growth medium. Therefore, by controlling the phosphorylation state of HPr, HPrK/P is a sensor enzyme that plays a major role in the regulation of carbon metabolism and sugar transport: it mediates carbon catabolite repression (CCR), and regulates PTS-catalyzed carbohydrate uptake and inducer exclusion. This Alkaliphilus metalliredigens (strain QYMF) protein is HPr kinase/phosphorylase.